The sequence spans 415 residues: Transfer protein TraSA (415 aa).

The 200-residue stretch at 127-326 folds into the FtsK domain; it reads DGAVHYRDYR…HRVNDETSAN (200 aa). 145–152 is an ATP binding site; it reads GATESGKS.

This Streptomyces ambofaciens protein is Transfer protein TraSA (traSA).